The sequence spans 328 residues: Trans-O-hydroxybenzylidenepyruvate hydratase-aldolase (328 aa).

It belongs to the DapA family. In terms of assembly, homotrimer.

It catalyses the reaction (3E)-4-(2-hydroxyphenyl)-2-oxobut-3-enoate + H2O = salicylaldehyde + pyruvate. Its pathway is aromatic compound metabolism; naphthalene degradation. With respect to regulation, inhibited bye p-chloromercuribenzoate and salicylaldehyde. Activated by salicylate. In terms of biological role, involved in the naphthalene and naphthalenesulfonate catabolic pathway. Catalyzes the transformation of trans-O-hydroxybenzylidenepyruvate (THBPA) to salicylaldehyde and pyruvate. The reaction is reversible. Can also use 2,4-dihydroxybenzalpyruvate (2,4-DHBP) and 2,6-dihydroxybenzalpyruvate (2,6-DHBP). The chain is Trans-O-hydroxybenzylidenepyruvate hydratase-aldolase (nsaE) from Sphingobium xenophagum.